Consider the following 113-residue polypeptide: Dynein light chain Tctex-type 1 (113 aa).

Methionine 1 carries the post-translational modification N-acetylmethionine. The segment at 41 to 113 (QWTTNVVEQT…CIVSAFGLSI (73 aa)) is interaction with GNB1.

The protein belongs to the dynein light chain Tctex-type family. Homodimer. The cytoplasmic dynein 1 complex consists of two catalytic heavy chains (HCs) and a number of non-catalytic subunits presented by intermediate chains (ICs), light intermediate chains (LICs) and light chains (LCs); the composition seems to vary in respect to the IC, LIC and LC composition. The heavy chain homodimer serves as a scaffold for the probable homodimeric assembly of the respective non-catalytic subunits. The ICs and LICs bind directly to the HC dimer and dynein LCs assemble on the IC dimer. DYNLT1 and DYNLT3 compete for association with dynein IC (DYNC1I1 or DYNC1I2). Self-associates. Interacts with RHO. Interacts with DYNC1I1 and DYNC1I2. Interacts with DOC2A, DOC2B and SCN10A. Interacts with PVR. Interacts with SVIL isoform 2. Interacts with GNB1; the interaction occurs in presence of guanine nucleotide-binding protein G(T) subunit gamma; the interaction diminishes the association of DYNLT1 with dynein IC (DYNC1I1 or DYNC1I2). Interacts with GNB2, GNB3 and GNB5; the interactions occur in presence of guanine nucleotide-binding protein G(T) subunit gamma. Interacts with ACVR2B and ARHGEF2. Interacts with DNAI4. Interacts with CFAP61. In terms of processing, phosphorylated by BMPR2. The phosphorylation status is proposed to regulate the association with the cytoplasmic dynein complex and may have role in cytoplasmic dynein cargo release.

It localises to the golgi apparatus. The protein resides in the cytoplasm. The protein localises to the cytoskeleton. Its subcellular location is the spindle. In terms of biological role, acts as one of several non-catalytic accessory components of the cytoplasmic dynein 1 complex that are thought to be involved in linking dynein to cargos and to adapter proteins that regulate dynein function. Cytoplasmic dynein 1 acts as a motor for the intracellular retrograde motility of vesicles and organelles along microtubules. Binds to transport cargos and is involved in apical cargo transport such as rhodopsin-bearing vesicles in polarized epithelia. Is involved in intracellular targeting of D-type retrovirus gag polyproteins to the cytoplasmic assembly site. May also be a accessory component of axonemal dynein. Plays a role in neuronal morphogenesis; the function is independent of cytoplasmic dynein and seems to be coupled to regulation of the actin cytoskeleton by enhancing Rac1 activity. Required for neurite outgrowth. The function in neurogenesis may be regulated by association with a G-protein beta-gamma dimer. May function as a receptor-independent activator of heterotrimeric G-protein signaling; the activation appears to be independent of a nucleotide exchange. Plays a role in regulating neurogenesis; inhibits the genesis of neurons from precursor cells during cortical development presumably by antagonizing ARHGEF2. Unrelated to the role in retrograde microtubule-associated movement may play a role in the dimerization of cytoplasmic proteins/domains such as for ACVR2B. Binds to the cytoplasmic domain of ACVR2B and, in vitro, inhibits ACVR2B signaling. Involved in the regulation of mitotic spindle orientation. This chain is Dynein light chain Tctex-type 1 (Dynlt1), found in Rattus norvegicus (Rat).